Reading from the N-terminus, the 134-residue chain is Putative pre-16S rRNA nuclease (134 aa).

It belongs to the YqgF nuclease family.

Its subcellular location is the cytoplasm. Functionally, could be a nuclease involved in processing of the 5'-end of pre-16S rRNA. This is Putative pre-16S rRNA nuclease from Helicobacter pylori (strain P12).